We begin with the raw amino-acid sequence, 432 residues long: Serine/threonine-protein phosphatase 2A activator 1 (432 aa).

Belongs to the PTPA-type PPIase family.

It localises to the cytoplasm. The protein resides in the nucleus. It catalyses the reaction [protein]-peptidylproline (omega=180) = [protein]-peptidylproline (omega=0). PPIases accelerate the folding of proteins. It catalyzes the cis-trans isomerization of proline imidic peptide bonds in oligopeptides. Acts as a regulatory subunit for PP2A-like phosphatases modulating their activity or substrate specificity, probably by inducing a conformational change in the catalytic subunit, a direct target of the PPIase. Can reactivate inactive phosphatase PP2A-phosphatase methylesterase complexes (PP2Ai) in presence of ATP and Mg(2+) by dissociating the inactive form from the complex. The polypeptide is Serine/threonine-protein phosphatase 2A activator 1 (rrd1) (Emericella nidulans (strain FGSC A4 / ATCC 38163 / CBS 112.46 / NRRL 194 / M139) (Aspergillus nidulans)).